A 183-amino-acid polypeptide reads, in one-letter code: Large ribosomal subunit protein uL6 (183 aa).

The protein belongs to the universal ribosomal protein uL6 family. In terms of assembly, part of the 50S ribosomal subunit.

This protein binds to the 23S rRNA, and is important in its secondary structure. It is located near the subunit interface in the base of the L7/L12 stalk, and near the tRNA binding site of the peptidyltransferase center. This is Large ribosomal subunit protein uL6 from Chlamydia trachomatis serovar A (strain ATCC VR-571B / DSM 19440 / HAR-13).